The following is a 141-amino-acid chain: Lutropin subunit beta (141 aa).

A signal peptide spans methionine 1–alanine 20. Disulfide bonds link cysteine 29-cysteine 77, cysteine 43-cysteine 92, cysteine 46-cysteine 130, cysteine 54-cysteine 108, cysteine 58-cysteine 110, and cysteine 113-cysteine 120. Asparagine 33 and asparagine 50 each carry an N-linked (GlcNAc...) asparagine glycan.

Belongs to the glycoprotein hormones subunit beta family. In terms of assembly, heterodimer of a common alpha chain and a unique beta chain which confers biological specificity to thyrotropin, lutropin, follitropin and gonadotropin.

The protein localises to the secreted. Functionally, promotes spermatogenesis and ovulation by stimulating the testes and ovaries to synthesize steroids. This is Lutropin subunit beta (LHB) from Pongo pygmaeus (Bornean orangutan).